The primary structure comprises 334 residues: Ornithine carbamoyltransferase (334 aa).

Carbamoyl phosphate contacts are provided by residues 57–60, Gln84, Arg108, and 135–138; these read STRT and HPTQ. L-ornithine-binding positions include Asn168, Asp232, and 236–237; that span reads SM. Carbamoyl phosphate is bound by residues 274 to 275 and Arg321; that span reads CL.

The protein belongs to the aspartate/ornithine carbamoyltransferase superfamily. OTCase family.

Its subcellular location is the cytoplasm. The enzyme catalyses carbamoyl phosphate + L-ornithine = L-citrulline + phosphate + H(+). Its pathway is amino-acid biosynthesis; L-arginine biosynthesis; L-arginine from L-ornithine and carbamoyl phosphate: step 1/3. Functionally, reversibly catalyzes the transfer of the carbamoyl group from carbamoyl phosphate (CP) to the N(epsilon) atom of ornithine (ORN) to produce L-citrulline. The chain is Ornithine carbamoyltransferase from Actinobacillus pleuropneumoniae serotype 5b (strain L20).